A 549-amino-acid chain; its full sequence is Nectin-3 (549 aa).

The signal sequence occupies residues 1 to 57; that stretch reads MARTLRPSPLCPGGGKAQLSSASLLGAGLLLQPPTPPPLLLLLFPLLLFSRLCGALA. The Extracellular segment spans residues 58-404; it reads GPIIVEPHVT…ATIKDDTIAT (347 aa). An Ig-like V-type domain is found at 59 to 165; it reads PIIVEPHVTA…GNAQSSTTVT (107 aa). N-linked (GlcNAc...) asparagine glycosylation is found at N73, N83, N125, N186, N222, and N331. A disulfide bridge connects residues C78 and C148. Ig-like C2-type domains are found at residues 170 to 258 and 269 to 354; these read PTVS…KDIR and PEVS…KVIY. Cystine bridges form between C193-C246 and C291-C338. Residues 405-425 form a helical membrane-spanning segment; that stretch reads IIASVVGGALFIVLVSVLAGI. Topologically, residues 426–549 are cytoplasmic; it reads FCYRRRRTFR…SVISRREWYV (124 aa).

The protein belongs to the nectin family. In terms of assembly, cis- and trans-homodimer. Can form trans-heterodimers with NECTIN1, NECTIN2, PVR, IGSF4B/Necl-1 and with IGSF4. Interaction between NECTIN1 and NECTIN3 on the pre- and postsynaptic sites, respectively, initiates the formation of puncta adherentia junctions between axons and dendrites. Interacts (via Cytoplasmic domain) with AFDN, providing a connection with the actin cytoskeleton. Binds with low affinity to TIGIT. (Microbial infection) Interacts with C.difficile toxin TcdB, suggesting that it may contribute to TcdB toxin entry into cells. It was however shown that NECTIN3/PVRL3 does not act as a major receptor for TcdB. Predominantly expressed in testis and placenta as well as in many cell lines, including epithelial cell lines.

It is found in the cell membrane. Its subcellular location is the postsynaptic cell membrane. It localises to the cell junction. The protein localises to the adherens junction. Its function is as follows. Cell adhesion molecule that promotes cell-cell adhesion through heterophilic trans-interactions with nectins-like or other nectins, such as trans-interaction with NECTIN2 at Sertoli-spermatid junctions. Trans-interaction with PVR induces activation of CDC42 and RAC small G proteins through common signaling molecules such as SRC and RAP1. Induces endocytosis-mediated down-regulation of PVR from the cell surface, resulting in reduction of cell movement and proliferation. Involved in axon guidance by promoting contacts between the commissural axons and the floor plate cells. Also involved in the formation of cell-cell junctions, including adherens junctions and synapses. Promotes formation of checkerboard-like cellular pattern of hair cells and supporting cells in the auditory epithelium via heterophilic interaction with NECTIN1: NECTIN1 is present in the membrane of hair cells and associates with NECTIN3 on supporting cells, thereby mediating heterotypic adhesion between these two cell types. Plays a role in the morphology of the ciliary body. This is Nectin-3 from Homo sapiens (Human).